Reading from the N-terminus, the 708-residue chain is Nucleolar protein 11-like (708 aa).

Its subcellular location is the nucleus. The protein localises to the nucleolus. Functionally, ribosome biogenesis factor. May be required for both optimal rDNA transcription and pre-rRNA processing. This Danio rerio (Zebrafish) protein is Nucleolar protein 11-like (nol11).